The chain runs to 73 residues: Large ribosomal subunit protein uL30 (73 aa).

This sequence belongs to the universal ribosomal protein uL30 family. As to quaternary structure, part of the 50S ribosomal subunit.

This chain is Large ribosomal subunit protein uL30, found in Borrelia hermsii (strain HS1 / DAH).